The sequence spans 63 residues: Anionic peptide 10.1 (63 aa).

The signal sequence occupies residues 1–20 (MISRFCLLFLLVFVVSKIQA).

This sequence belongs to the non-disulfide-bridged peptide (NDBP) superfamily. Long chain multifunctional peptide (group 2) family. As to expression, expressed by the venom gland.

It localises to the secreted. In Lychas mucronatus (Chinese swimming scorpion), this protein is Anionic peptide 10.1.